The primary structure comprises 695 residues: Follicle-stimulating hormone receptor (695 aa).

The N-terminal stretch at 1 to 17 is a signal peptide; it reads MALLLVSLLAFLSLGSG. 2 cysteine pairs are disulfide-bonded: cysteine 18–cysteine 25 and cysteine 23–cysteine 32. The 29-residue stretch at 18-46 folds into the LRRNT domain; it reads CHHRICHCSNRVFLCQESKVTEIPSDLPR. Over 18-366 the chain is Extracellular; sequence CHHRICHCSN…EDIMGYNILR (349 aa). LRR repeat units follow at residues 49–72, 73–97, 98–118, 119–143, 144–169, 170–192, 193–216, 217–240, and 241–259; these read IELRFVLTKLRVIQKGAFSGFGDL, EKIEISQNDVLEVIEADVFSNLPKL, HEIRIEKANNLLYINPEAFQN, LPNLQYLLISNTGIKHLPDVHKIHS, LQKVLLDIQDNINIHTIERNSFVGLS, FESVILWLNKNGIQEIHNCAFNG, TQLDELNLSDNNNLEELPNDVFHG, ASGPVILDISRTRIHSLPSYGLEN, and LKKLRARSTYNLKKLPTLE. Residues asparagine 191 and asparagine 199 are each glycosylated (N-linked (GlcNAc...) asparagine). 4 disulfide bridges follow: cysteine 275-cysteine 346, cysteine 276-cysteine 292, cysteine 276-cysteine 356, and cysteine 292-cysteine 338. 2 N-linked (GlcNAc...) asparagine glycosylation sites follow: asparagine 293 and asparagine 318. A Sulfotyrosine modification is found at tyrosine 335. A helical transmembrane segment spans residues 367–387; that stretch reads VLIWFISILAITGNIIVLVIL. At 388–398 the chain is on the cytoplasmic side; sequence TTSQYKLTVPR. The helical transmembrane segment at 399–421 threads the bilayer; it reads FLMCNLAFADLCIGIYLLLIASV. The Extracellular segment spans residues 422-443; the sequence is DIHTKSQYHNYAIDWQTGAGCD. A disulfide bond links cysteine 442 and cysteine 517. A helical membrane pass occupies residues 444 to 465; it reads AAGFFTVFASELSVYTLTAITL. Over 466 to 485 the chain is Cytoplasmic; that stretch reads ERWHTITHAMQLDCKVQLRH. A helical membrane pass occupies residues 486–508; it reads AASVMVMGWIFAFAAALFPIFGI. The Extracellular segment spans residues 509-528; sequence SSYMKVSICLPMDIDSPLSQ. A helical transmembrane segment spans residues 529 to 550; it reads LYVMSLLVLNVLAFVVICGCYI. The Cytoplasmic portion of the chain corresponds to 551-573; it reads HIYLTVRNPNIVSSSSDTRIAKR. The helical transmembrane segment at 574–597 threads the bilayer; sequence MAMLIFTDFLCMAPISFFAISASL. At 598 to 608 the chain is on the extracellular side; the sequence is KVPLITVSKAK. A helical transmembrane segment spans residues 609 to 630; sequence ILLVLFHPINSCANPFLYAIFT. Residues 631 to 695 are Cytoplasmic-facing; sequence KNFRRDFFIL…LVPLSHLAQN (65 aa).

It belongs to the G-protein coupled receptor 1 family. FSH/LSH/TSH subfamily. Homotrimer. Functions as a homotrimer binding the FSH hormone heterodimer composed of CGA and FSHB. Interacts with ARRB2. Interacts with APPL2; interaction is independent of follicle stimulating hormone stimulation. Sulfated. In terms of processing, N-glycosylated; indirectly required for FSH-binding, possibly via a conformational change that allows high affinity binding of hormone. Sertoli cells and ovarian granulosa cells.

Its subcellular location is the cell membrane. In terms of biological role, g protein-coupled receptor for follitropin, the follicle-stimulating hormone. Through cAMP production activates the downstream PI3K-AKT and ERK1/ERK2 signaling pathways. In Homo sapiens (Human), this protein is Follicle-stimulating hormone receptor (FSHR).